Consider the following 953-residue polypeptide: Translation initiation factor IF-2 (953 aa).

Disordered stretches follow at residues 51–242 (SKAS…QEAK) and 279–363 (TKLK…TERK). 2 stretches are compositionally biased toward basic and acidic residues: residues 80–89 (TGSEHVEKTQ) and 98–111 (FKAE…EQAA). The span at 131–140 (QPNNHQTNEQ) shows a compositional bias: polar residues. The span at 149–188 (SQGDTNDKRIERKASNVSPRHDNHQLVGDRNRSFAKENHK) shows a compositional bias: basic and acidic residues. Residues 191–207 (RFTNQKKQGRQEPQSKS) show a composition bias toward polar residues. Residues 229–242 (RQSETRFRAQQEAK) show a composition bias toward basic and acidic residues. Residues 282-291 (KSSNISAKST) are compositionally biased toward polar residues. The span at 300-317 (ARPEKNRELTHHSQEGQK) shows a compositional bias: basic and acidic residues. Over residues 322-338 (SWNSQNQVRNQKNSNWN) the composition is skewed to low complexity. The segment covering 339-348 (KNKKTKKGKN) has biased composition (basic residues). Residues 454-623 (ERAPVVTIMG…LLVAEVEELK (170 aa)) enclose the tr-type G domain. Positions 463 to 470 (GHVDHGKT) are G1. GTP is bound at residue 463-470 (GHVDHGKT). A G2 region spans residues 488 to 492 (GITQH). The interval 509-512 (DTPG) is G3. Residues 509 to 513 (DTPGH) and 563 to 566 (NKID) contribute to the GTP site. The segment at 563–566 (NKID) is G4. The G5 stretch occupies residues 599–601 (SAK).

It belongs to the TRAFAC class translation factor GTPase superfamily. Classic translation factor GTPase family. IF-2 subfamily.

It localises to the cytoplasm. Functionally, one of the essential components for the initiation of protein synthesis. Protects formylmethionyl-tRNA from spontaneous hydrolysis and promotes its binding to the 30S ribosomal subunits. Also involved in the hydrolysis of GTP during the formation of the 70S ribosomal complex. The sequence is that of Translation initiation factor IF-2 from Streptococcus pyogenes serotype M49 (strain NZ131).